The chain runs to 900 residues: Formin-like protein 5 (900 aa).

Residues 15 to 32 (SRLVFWLILFSGLLVITL) form a helical; Signal-anchor membrane-spanning segment. Residues 136 to 209 (RNLATKPGSS…PVSPAKKKED (74 aa)) form a disordered region. The segment covering 160–173 (PPRPPTRPKSPPPR) has biased composition (pro residues). A helical transmembrane segment spans residues 214–234 (IIIAVVVTAVSTFLLAALFFL). Disordered stretches follow at residues 273–440 (SVKG…DAPK) and 849–900 (ARGR…SDSD). A compositionally biased stretch (polar residues) spans 281–304 (HQSFNIYSNQGKMSSFDGSNSDTS). Residues 307–316 (LEERLSHEGL) are compositionally biased toward basic and acidic residues. Residues 359–368 (FLKVSSKKAS) are compositionally biased toward low complexity. Positions 369–429 (APPPPVPAPQ…GPKAPRPPSG (61 aa)) are enriched in pro residues. The FH2 domain maps to 433-865 (ALDDDAPKTK…MARKQGSTAS (433 aa)). The span at 860–876 (QGSTASASSETPRQTPS) shows a compositional bias: polar residues.

The protein belongs to the formin-like family. Class-I subfamily. In terms of tissue distribution, expressed in the endosperm. Localizes to the cell plate, a plant-specific membranous component that is assembled at the plane of cell division.

The protein localises to the membrane. Its function is as follows. Might be involved in the organization and polarity of the actin cytoskeleton. Interacts with the barbed end of actin filaments and nucleates actin-filament polymerization in vitro. Seems to play a role in cytokinesis. The protein is Formin-like protein 5 (FH5) of Arabidopsis thaliana (Mouse-ear cress).